A 146-amino-acid chain; its full sequence is MIF-like protein mif-3 (146 aa).

This sequence belongs to the MIF family.

The polypeptide is MIF-like protein mif-3 (mif-3) (Caenorhabditis elegans).